The primary structure comprises 145 residues: Hemoglobin subunit beta-2 (145 aa).

The 144-residue stretch at 2–145 (HLTAEDRKEI…GVSHALGHGY (144 aa)) folds into the Globin domain. Positions 63 and 92 each coordinate heme b.

It belongs to the globin family. Minor hemoglobin is a tetramer of two alpha-2 chains and two beta-2 chains. In terms of tissue distribution, red blood cells.

Its function is as follows. Involved in oxygen transport from the lung to the various peripheral tissues. In Triturus cristatus (Great crested newt), this protein is Hemoglobin subunit beta-2 (HBB2).